The chain runs to 587 residues: uncharacterized protein (587 aa).

One can recognise a YcaO domain in the interval 61 to 426 (GKGASKKAAL…DLPNWHHDAE (366 aa)).

This is an uncharacterized protein from Haemophilus influenzae (strain ATCC 51907 / DSM 11121 / KW20 / Rd).